A 472-amino-acid chain; its full sequence is 3-isopropylmalate dehydratase large subunit (472 aa).

[4Fe-4S] cluster contacts are provided by Cys353, Cys414, and Cys417.

It belongs to the aconitase/IPM isomerase family. LeuC type 1 subfamily. In terms of assembly, heterodimer of LeuC and LeuD. [4Fe-4S] cluster serves as cofactor.

It carries out the reaction (2R,3S)-3-isopropylmalate = (2S)-2-isopropylmalate. It functions in the pathway amino-acid biosynthesis; L-leucine biosynthesis; L-leucine from 3-methyl-2-oxobutanoate: step 2/4. Catalyzes the isomerization between 2-isopropylmalate and 3-isopropylmalate, via the formation of 2-isopropylmaleate. The sequence is that of 3-isopropylmalate dehydratase large subunit from Acinetobacter baumannii (strain AB0057).